Reading from the N-terminus, the 72-residue chain is N-alpha-acetyltransferase 38, NatC auxiliary subunit (72 aa).

The region spanning 3-72 is the Sm domain; it reads NGEILLTSWL…KHIKSFSVRA (70 aa).

In terms of assembly, component of the N-terminal acetyltransferase C (NatC) complex, composed of the catalytic subunit Naa30, a large auxiliary subunit Naa35 and a small auxiliary subunit Naa38.

The protein resides in the endoplasmic reticulum. Component of the NatC N-terminal acetyltransferase, which associates with the ribosome to acetylate nascent protein chains in a cotranslational manner. NatC acetylates protein N-termini starting with methionine, followed by a hydrophobic or amphipathic amino acid, with amino acids at positions 3 and 4 also contributing to NatC recognition. The first 4 amino acids of cognate substrates are recognized at the Naa30-Naa35 interface. NatC-dependent acetylation targets various substrate proteins to specific subcellular sites. This is N-alpha-acetyltransferase 38, NatC auxiliary subunit (naa38) from Schizosaccharomyces pombe (strain 972 / ATCC 24843) (Fission yeast).